Consider the following 504-residue polypeptide: Terminase, large subunit (504 aa).

The interval Met1–Lys204 is ATPase activity. The Walker A motif signature appears at Ile54–Thr61. The Walker B motif motif lies at Leu149–Glu154. Residues Phe326 to Phe415 form a nuclease activity region. Mg(2+) is bound at residue Asp471.

Belongs to the Hendrixvirinae large terminase family. As to quaternary structure, homopentamer; forms a ring-like structure through which genomic DNA is translocated into the capsid. Interacts with the terminase small subunit; the active complex is composed of a pentamer ring of terminase large subunits and a nonamer ring of terminase small subunits. Interacts with the portal protein; this interaction allows the packaging of viral DNA. Mg(2+) serves as cofactor. It depends on Mn(2+) as a cofactor.

Its activity is regulated as follows. Inhibited by zinc. The terminase large subunit acts as an ATP driven molecular motor necessary for viral DNA translocation into empty capsids and as an endonuclease that cuts the viral genome from the concetamer to initiate and to end a packaging reaction. The terminase lies at a unique vertex of the procapsid and is composed of two subunits, a small terminase subunit involved in viral DNA recognition (packaging sequence), and a large terminase subunit possessing endonucleolytic and ATPase activities. Both terminase subunits heterooligomerize and are docked on the portal protein to form the packaging machine. Packaging initiates by TerS recognizing the packaging sequence in the viral DNA. The nuclease activity of TerL cuts the viral DNA and the terminase-DNA complex binds to the portal of a procapsid shell. DNA is translocated into the capsid, powered by the packaging ATPase in TerL, which continues until the next site is encountered at which point the motor stops and again cuts the DNA to release the nucleocapsid filled with a unit-length genome ('unit length' packaging). This is Terminase, large subunit (2) from Escherichia coli (Bacteriophage HK97).